The following is a 428-amino-acid chain: AP-1 complex subunit mu-1 (428 aa).

The MHD domain maps to 170 to 426 (KNEVFLDVIE…ITMAGEYELR (257 aa)).

The protein belongs to the adaptor complexes medium subunit family. In terms of assembly, adaptor protein complex 1 (AP-1) is a heterotetramer composed of two large adaptins (gamma-type subunit and beta-type subunit), a medium adaptin (mu-type subunit) and a small adaptin (sigma-type subunit).

Its subcellular location is the golgi apparatus. The protein localises to the cytoplasmic vesicle. It localises to the clathrin-coated vesicle membrane. Its function is as follows. Subunit of clathrin-associated adaptor protein complex 1 that plays a role in protein sorting at the trans-Golgi network and early endosomes (TGN/EE). The AP complexes mediate the recruitment of clathrin to membranes and the recognition of sorting signals within the cytosolic tails of transmembrane cargo molecules. Functions redundantly with AP1M2 in multiple post-Golgi trafficking pathways leading from the TGN to the vacuole, the plasma membrane, and the cell-division plane. The sequence is that of AP-1 complex subunit mu-1 (AP1M1) from Arabidopsis thaliana (Mouse-ear cress).